The sequence spans 261 residues: Undecaprenyl-diphosphatase 2 (261 aa).

The next 8 membrane-spanning stretches (helical) occupy residues Met1–Ser21, Pro38–Phe58, Phe75–Leu95, Leu103–Ile123, Met138–Val158, Ala178–Leu198, Leu212–Ile232, and Phe240–Met260.

The protein belongs to the UppP family.

The protein resides in the cell inner membrane. The enzyme catalyses di-trans,octa-cis-undecaprenyl diphosphate + H2O = di-trans,octa-cis-undecaprenyl phosphate + phosphate + H(+). Functionally, catalyzes the dephosphorylation of undecaprenyl diphosphate (UPP). Confers resistance to bacitracin. The protein is Undecaprenyl-diphosphatase 2 of Paramagnetospirillum magneticum (strain ATCC 700264 / AMB-1) (Magnetospirillum magneticum).